Consider the following 95-residue polypeptide: Cell division protein FtsB (95 aa).

Topologically, residues 1 to 3 (MRW) are cytoplasmic. A helical transmembrane segment spans residues 4–21 (VLAGLTALLLWLQGLLWF). At 22 to 95 (GEGGLNDVRG…QIIEREDDAR (74 aa)) the chain is on the periplasmic side. Positions 26-76 (LNDVRGLSRSVEAQREEVDRLRQRNQALEAEVNDLKTGLEALEERARSELG) form a coiled coil.

The protein belongs to the FtsB family. Part of a complex composed of FtsB, FtsL and FtsQ.

The protein resides in the cell inner membrane. Its function is as follows. Essential cell division protein. May link together the upstream cell division proteins, which are predominantly cytoplasmic, with the downstream cell division proteins, which are predominantly periplasmic. The protein is Cell division protein FtsB of Alkalilimnicola ehrlichii (strain ATCC BAA-1101 / DSM 17681 / MLHE-1).